A 278-amino-acid chain; its full sequence is Short-chain dehydrogenase/reductase eupG (278 aa).

NADP(+)-binding residues include Leu-19, Asp-71, and Asn-98. The active-site Proton donor is Ser-155. Residues Tyr-188, Lys-192, and Thr-223 each coordinate NADP(+). The active-site Proton acceptor is Tyr-188. Lys-192 acts as the Lowers pKa of active site Tyr in catalysis.

The protein belongs to the short-chain dehydrogenases/reductases (SDR) family.

It functions in the pathway secondary metabolite biosynthesis; terpenoid biosynthesis. Short-chain dehydrogenase/reductase; part of the gene cluster that mediates the biosynthesis of eupenifeldin, a bistropolone meroterpenoid that acts as an antitumor agent. The first step of eupenifeldin biosynthesis is the biosynthesis of 3-methylorcinaldehyde performed by the non-reducing polyketide synthase eupA. Oxidative dearomatization of 3-methylorcinaldehyde likely catalyzed by the FAD-dependent monooxygenase eupB is followed by oxidative ring expansion by the 2-oxoglutarate-dependent dioxygenase eupC to provide the first tropolone metabolite, tropolone stipitaldehyde. In parallel, generation of sesquiterpene alpha-humulene from farnesylpyrophosphate (FPP) is catalyzed by the terpene cyclase eupE. The cytochrome P450 monooxygenase eupD then hydroxylates humulene to humulenol. The putative Diels-Alderase eupF probably catalyzes the formation of the tropolone-humulene skeleton by linking humulenol and the polyketide moiety. The short-chain dehydrogenase/reductase eupG and the flavin-dependent monooxygenase eupH are also essential for eupenifeldin biosynthesis and are likely the additional decorating enzymes of the tropolone-humulene skeleton to produce final eupenifeldin or derivatives. The polypeptide is Short-chain dehydrogenase/reductase eupG (Phoma sp).